We begin with the raw amino-acid sequence, 943 residues long: Isoleucine--tRNA ligase (943 aa).

A 'HIGH' region motif is present at residues 58–68 (PYANGKIHIGH). Glu567 contributes to the L-isoleucyl-5'-AMP binding site. The short motif at 608–612 (KMSKS) is the 'KMSKS' region element. Lys611 provides a ligand contact to ATP. Zn(2+) is bound by residues Cys906, Cys909, Cys926, and Cys929.

It belongs to the class-I aminoacyl-tRNA synthetase family. IleS type 1 subfamily. As to quaternary structure, monomer. Zn(2+) serves as cofactor.

The protein localises to the cytoplasm. The enzyme catalyses tRNA(Ile) + L-isoleucine + ATP = L-isoleucyl-tRNA(Ile) + AMP + diphosphate. Its function is as follows. Catalyzes the attachment of isoleucine to tRNA(Ile). As IleRS can inadvertently accommodate and process structurally similar amino acids such as valine, to avoid such errors it has two additional distinct tRNA(Ile)-dependent editing activities. One activity is designated as 'pretransfer' editing and involves the hydrolysis of activated Val-AMP. The other activity is designated 'posttransfer' editing and involves deacylation of mischarged Val-tRNA(Ile). The sequence is that of Isoleucine--tRNA ligase from Pseudomonas putida (strain GB-1).